A 584-amino-acid chain; its full sequence is Alpha-glucosidase MAL32 (584 aa).

Aspartate 214 serves as the catalytic Nucleophile. Catalysis depends on glutamate 276, which acts as the Proton donor.

This sequence belongs to the glycosyl hydrolase 13 family.

It catalyses the reaction Hydrolysis of terminal, non-reducing (1-&gt;4)-linked alpha-D-glucose residues with release of alpha-D-glucose.. This is Alpha-glucosidase MAL32 (MAL32) from Saccharomyces cerevisiae (strain ATCC 204508 / S288c) (Baker's yeast).